The primary structure comprises 200 residues: MAEVGLEGNQPVDLSKHPSGIVPTLQNIVSTVNLDCKLDLKAIALQARNAEYNPKRFAAVIMRIREPKTTALIFASGKMVCTGAKSEQSSKLAARKYARIIQKLGFDAKFKDFKIQNIVGSCDVKFPIRLEGLAYSHGAFSSYEPELFPGLIYRMKQPKIVLLIFVSGKIVLTGAKVRDETYTAFENIYPVLTEFRKNQQ.

2 tandem repeats follow at residues 25–101 and 115–192.

This sequence belongs to the TBP family. Belongs to the TFIID complex together with the TBP-associated factors (TAFs). Binds DNA as monomer.

Its subcellular location is the nucleus. Functionally, general transcription factor that functions at the core of the DNA-binding multiprotein factor TFIID. Binding of TFIID to the TATA box is the initial transcriptional step of the pre-initiation complex (PIC), playing a role in the activation of eukaryotic genes transcribed by RNA polymerase II. This Nicotiana tabacum (Common tobacco) protein is TATA-box-binding protein.